The sequence spans 91 residues: Putative antitoxin YutD (91 aa).

Cysteines 77 and 81 form a disulfide.

As to quaternary structure, homodimer, probably forms a complex with cognate toxin YutE.

In terms of biological role, probable antitoxin component of a putative type VII toxin-antitoxin (TA) system. Probably neutralizes cognate toxin YutE. The protein is Putative antitoxin YutD (yutD) of Bacillus subtilis (strain 168).